Consider the following 242-residue polypeptide: Urease accessory protein UreF (242 aa).

This sequence belongs to the UreF family. As to quaternary structure, ureD, UreF and UreG form a complex that acts as a GTP-hydrolysis-dependent molecular chaperone, activating the urease apoprotein by helping to assemble the nickel containing metallocenter of UreC. The UreE protein probably delivers the nickel.

It is found in the cytoplasm. Functionally, required for maturation of urease via the functional incorporation of the urease nickel metallocenter. In Bradyrhizobium diazoefficiens (strain JCM 10833 / BCRC 13528 / IAM 13628 / NBRC 14792 / USDA 110), this protein is Urease accessory protein UreF.